Here is a 99-residue protein sequence, read N- to C-terminus: DNA-directed RNA polymerase subunit omega (99 aa).

Positions 1-10 (MSSTSAASAA) are enriched in low complexity. A disordered region spans residues 1–20 (MSSTSAASAAGQGALPAYDT).

This sequence belongs to the RNA polymerase subunit omega family. The RNAP catalytic core consists of 2 alpha, 1 beta, 1 beta' and 1 omega subunit. When a sigma factor is associated with the core the holoenzyme is formed, which can initiate transcription.

It catalyses the reaction RNA(n) + a ribonucleoside 5'-triphosphate = RNA(n+1) + diphosphate. Its function is as follows. Promotes RNA polymerase assembly. Latches the N- and C-terminal regions of the beta' subunit thereby facilitating its interaction with the beta and alpha subunits. The polypeptide is DNA-directed RNA polymerase subunit omega (Rhodococcus erythropolis (strain PR4 / NBRC 100887)).